The chain runs to 412 residues: Protein arginine N-methyltransferase 2 (412 aa).

The segment covering 48–65 has biased composition (basic and acidic residues); sequence EKNRNGDKEFRESTDDNK. Disordered stretches follow at residues 48–69 and 169–189; these read EKNRNGDKEFRESTDDNKTSNT and SVQTAVDGQKEESVGSDDDAT. A phosphoserine mark is found at Ser181 and Ser184. The RMT2 domain maps to 189–412; it reads TAANQQVYLK…YYYHPRITFA (224 aa). S-adenosyl-L-methionine-binding positions include Tyr196, Met226, 250 to 255, 271 to 273, 298 to 299, and Asp319; these read FGMGII, EAH, and WQ.

This sequence belongs to the class I-like SAM-binding methyltransferase superfamily. RMT2 methyltransferase family. In terms of assembly, monomer. Interacts with nucleoporins NUP49, NUP57 and NUP100.

It localises to the cytoplasm. The protein localises to the nucleus. S-adenosyl-L-methionine-dependent protein-arginine N-methyltransferase that methylates the delta-nitrogen atom of arginine residues to form N5-methylarginine (type IV) in target proteins. Monomethylates ribosomal protein L12 (RPL12A/RPL12B) at 'Arg-67'. This is Protein arginine N-methyltransferase 2 from Saccharomyces cerevisiae (strain ATCC 204508 / S288c) (Baker's yeast).